Reading from the N-terminus, the 289-residue chain is ATP synthase gamma chain (289 aa).

The protein belongs to the ATPase gamma chain family. In terms of assembly, F-type ATPases have 2 components, CF(1) - the catalytic core - and CF(0) - the membrane proton channel. CF(1) has five subunits: alpha(3), beta(3), gamma(1), delta(1), epsilon(1). CF(0) has three main subunits: a, b and c.

The protein resides in the cell inner membrane. Its function is as follows. Produces ATP from ADP in the presence of a proton gradient across the membrane. The gamma chain is believed to be important in regulating ATPase activity and the flow of protons through the CF(0) complex. In Actinobacillus succinogenes (strain ATCC 55618 / DSM 22257 / CCUG 43843 / 130Z), this protein is ATP synthase gamma chain.